A 344-amino-acid chain; its full sequence is Ferrochelatase (344 aa).

Fe cation is bound by residues H214 and E295.

Belongs to the ferrochelatase family.

The protein resides in the cytoplasm. It carries out the reaction heme b + 2 H(+) = protoporphyrin IX + Fe(2+). It participates in porphyrin-containing compound metabolism; protoheme biosynthesis; protoheme from protoporphyrin-IX: step 1/1. Catalyzes the ferrous insertion into protoporphyrin IX. The polypeptide is Ferrochelatase (Rhizobium etli (strain CIAT 652)).